A 961-amino-acid polypeptide reads, in one-letter code: Endochitinase A (961 aa).

Residues 1–21 (MAPKLFTFVSALSGLASLASA) form the signal peptide. The 312-residue stretch at 28–339 (SNIAVYYGQG…EKIREILYDL (312 aa)) folds into the GH18 domain. The Proton donor role is filled by Glu-175. Disordered stretches follow at residues 338 to 720 (DLDP…TTTE), 767 to 787 (TDVP…TADI), 813 to 842 (PPAT…GEVS), and 912 to 933 (HVPV…ASPT). The segment covering 342–355 (NHPPPTTSPTPTPT) has biased composition (pro residues). Composition is skewed to low complexity over residues 356–510 (PSTT…STSS), 519–544 (SSTS…PVIS), 552–604 (TSSS…PETT), and 612–635 (TPGS…PATS). The span at 636–665 (GGHTETSTVSTSSANQTPSASTSKPLIPTN) shows a compositional bias: polar residues. Positions 666-720 (SASSTSTGSVTSTPSAPGVPSSSAGSDETATTSTTDSEPTSTSSGSVTAKPTTTE) are enriched in low complexity. Gly-936 carries GPI-anchor amidated glycine lipidation. A propeptide spans 937 to 961 (AGSRYDVVKGVPALVALALSLLAVL) (removed in mature form).

The protein belongs to the glycosyl hydrolase 18 family. Chitinase class III subfamily. Post-translationally, O-glycosylated but not N-glycosylated.

Its subcellular location is the cell membrane. The protein localises to the secreted. It is found in the cell wall. It localises to the cell tip. It carries out the reaction Random endo-hydrolysis of N-acetyl-beta-D-glucosaminide (1-&gt;4)-beta-linkages in chitin and chitodextrins.. In terms of biological role, GPI-anchored chitinase involved in the degradation of chitin, a component of the cell walls of fungi and exoskeletal elements of some animals (including worms and arthropods). Required to reshape the cell wall at the sites where cell wall remodeling and/or cell wall maturation actively take place such as sites of conidia formation. In Emericella nidulans (Aspergillus nidulans), this protein is Endochitinase A (chiA).